A 287-amino-acid chain; its full sequence is S-methyl-5'-thioadenosine phosphorylase (287 aa).

Residues T13 and 55-56 (RH) contribute to the phosphate site. M186 contributes to the substrate binding site. Residue T187 coordinates phosphate. 210–212 (DYD) is a binding site for substrate.

This sequence belongs to the PNP/MTAP phosphorylase family. MTAP subfamily. In terms of assembly, homohexamer. Dimer of a homotrimer.

The enzyme catalyses S-methyl-5'-thioadenosine + phosphate = 5-(methylsulfanyl)-alpha-D-ribose 1-phosphate + adenine. It participates in amino-acid biosynthesis; L-methionine biosynthesis via salvage pathway; S-methyl-5-thio-alpha-D-ribose 1-phosphate from S-methyl-5'-thioadenosine (phosphorylase route): step 1/1. Functionally, catalyzes the reversible phosphorylation of S-methyl-5'-thioadenosine (MTA) to adenine and 5-methylthioribose-1-phosphate. Involved in the breakdown of MTA, a major by-product of polyamine biosynthesis. Responsible for the first step in the methionine salvage pathway after MTA has been generated from S-adenosylmethionine. Has broad substrate specificity with 6-aminopurine nucleosides as preferred substrates. The sequence is that of S-methyl-5'-thioadenosine phosphorylase from Leptospira interrogans serogroup Icterohaemorrhagiae serovar Lai (strain 56601).